The primary structure comprises 471 residues: Phosphatidate cytidylyltransferase 3 (471 aa).

The tract at residues 1–72 (MAMEKDLSPN…HRRRSSENLA (72 aa)) is disordered. A compositionally biased stretch (polar residues) spans 21-35 (SYPTTPTSRMNTNNQ). 8 consecutive transmembrane segments (helical) span residues 97-116 (WIRT…IIYM), 120-139 (YIWA…LFFL), 149-169 (LPGF…FVYG), 196-216 (YQMV…ILTL), 228-250 (YAWT…ANIF), 255-277 (WFLL…GFYF), 293-313 (GFIG…NVLG), and 368-388 (FSLG…ASGF).

The protein belongs to the CDS family. The cofactor is Mg(2+).

The protein localises to the membrane. It catalyses the reaction a 1,2-diacyl-sn-glycero-3-phosphate + CTP + H(+) = a CDP-1,2-diacyl-sn-glycerol + diphosphate. The protein operates within phospholipid metabolism; CDP-diacylglycerol biosynthesis; CDP-diacylglycerol from sn-glycerol 3-phosphate: step 3/3. May be involved in the synthesis of minor phospholipids and in modulation of IP3-mediated signal transduction. The chain is Phosphatidate cytidylyltransferase 3 from Arabidopsis thaliana (Mouse-ear cress).